A 213-amino-acid polypeptide reads, in one-letter code: Motile sperm domain-containing protein 1 (213 aa).

The MSP domain maps to 16-143; sequence PVFVFPTELI…KEHLTESLFF (128 aa). The next 2 membrane-spanning stretches (helical) occupy residues 159-179 and 191-211; these read SLLT…PTLG and LSVN…MAIF. The Nuclear export signal signature appears at 205–208; that stretch reads LITM.

It localises to the endoplasmic reticulum membrane. The protein resides in the golgi apparatus membrane. Plays a role in differentiation and/or proliferation of mesenchymal stem cells. Proposed to be involved in epithelial-to-mesenchymal transition (EMT). However, another study suggests that it is not required for EMT or stem cell self-renewal and acts during later stages of differentiation. This chain is Motile sperm domain-containing protein 1 (MOSPD1), found in Bos taurus (Bovine).